The chain runs to 520 residues: Solute carrier family 2, facilitated glucose transporter member 14 (520 aa).

The Cytoplasmic segment spans residues 1-29 (MEFHNGGHVSGIGGFLVSLTSRMKPHTLA). A helical transmembrane segment spans residues 30–50 (VTPALIFAITVATIGSFQFGY). Residues 51–88 (NTGVINAPETIIKEFINKTLTDKANAPPSEVLLTNLWS) are Extracellular-facing. The N-linked (GlcNAc...) asparagine glycan is linked to Asn67. Residues 89–109 (LSVAIFSVGGMIGSFSVGLFV) form a helical membrane-spanning segment. Residues 110–117 (NRFGRRNS) lie on the Cytoplasmic side of the membrane. A helical transmembrane segment spans residues 118–138 (MLIVNLLAATGGCLMGLCKIA). Over 139 to 148 (ESVEMLILGR) the chain is Extracellular. The helical transmembrane segment at 149-169 (LVIGLFCGLCTGFVPMYIGEI) threads the bilayer. The Cytoplasmic segment spans residues 170–177 (SPTALRGA). Residues 178-198 (FGTLNQLGIVIGILVAQIFGL) form a helical membrane-spanning segment. Gln183 is a D-glucose binding site. Residues 199–207 (ELILGSEEL) lie on the Extracellular side of the membrane. The chain crosses the membrane as a helical span at residues 208–228 (WPVLLGFTILPAILQSAALPC). Residues 229–293 (CPESPRFLLI…LFRVSSYRQP (65 aa)) are Cytoplasmic-facing. A helical transmembrane segment spans residues 294-314 (IIISIVLQLSQQLSGINAVFY). D-glucose-binding positions include 304-305 (QQ) and Asn310. At 315–328 (YSTGIFKDAGVQQP) the chain is on the extracellular side. The chain crosses the membrane as a helical span at residues 329-349 (IYATISAGVVNTIFTLLSLFL). Position 339 (Asn339) interacts with D-glucose. Over 350 to 358 (VERAGRRTL) the chain is Cytoplasmic. Residues 359–379 (HMIGLGGMAFCSTLMTVSLLL) form a helical membrane-spanning segment. At 380-392 (KNHYNGMSFVCIG) the chain is on the extracellular side. The chain crosses the membrane as a helical span at residues 393–413 (AILVFVACFEIGPGPIPWFIV). Positions 402 and 410 each coordinate D-glucose. Over 414-423 (AELFSQGPRP) the chain is Cytoplasmic. Residues 424–444 (AAMAVAGCSNWTSNFLVGLLF) traverse the membrane as a helical segment. The Extracellular portion of the chain corresponds to 445–451 (PSAAYYL). Residues 452–472 (GAYVFIIFTGFLITFLAFTFF) form a helical membrane-spanning segment. Residues 473–520 (KVPETRGRTFEDITRAFEGQAHGADRSGKDGVMGMNSIEPAKETTTNV) are Cytoplasmic-facing. Residues 493–520 (AHGADRSGKDGVMGMNSIEPAKETTTNV) form a disordered region.

This sequence belongs to the major facilitator superfamily. Sugar transporter (TC 2.A.1.1) family. Glucose transporter subfamily. Mainly expressed in testis. Also expressed in small intestine, liver and kidney.

The protein resides in the cell membrane. It carries out the reaction D-glucose(out) = D-glucose(in). The enzyme catalyses L-dehydroascorbate(out) = L-dehydroascorbate(in). Functionally, hexose transporter that can mediate the transport of glucose and dehydroascorbate across the cell membrane. The chain is Solute carrier family 2, facilitated glucose transporter member 14 from Homo sapiens (Human).